The sequence spans 214 residues: Large ribosomal subunit protein uL3 (214 aa).

Residues 130 to 151 are compositionally biased toward polar residues; sequence FSSNRASHGNSRSHNTPGSIGQ. The disordered stretch occupies residues 130-163; the sequence is FSSNRASHGNSRSHNTPGSIGQAQDPGRVFPGKR. At Q153 the chain carries N5-methylglutamine.

The protein belongs to the universal ribosomal protein uL3 family. Part of the 50S ribosomal subunit. Forms a cluster with proteins L14 and L19. Methylated by PrmB.

Its function is as follows. One of the primary rRNA binding proteins, it binds directly near the 3'-end of the 23S rRNA, where it nucleates assembly of the 50S subunit. This is Large ribosomal subunit protein uL3 from Chromobacterium violaceum (strain ATCC 12472 / DSM 30191 / JCM 1249 / CCUG 213 / NBRC 12614 / NCIMB 9131 / NCTC 9757 / MK).